The sequence spans 476 residues: Glycogen synthase (476 aa).

Lysine 15 provides a ligand contact to ADP-alpha-D-glucose.

Belongs to the glycosyltransferase 1 family. Bacterial/plant glycogen synthase subfamily.

The catalysed reaction is [(1-&gt;4)-alpha-D-glucosyl](n) + ADP-alpha-D-glucose = [(1-&gt;4)-alpha-D-glucosyl](n+1) + ADP + H(+). The protein operates within glycan biosynthesis; glycogen biosynthesis. Functionally, synthesizes alpha-1,4-glucan chains using ADP-glucose. In Bacillus anthracis, this protein is Glycogen synthase.